A 145-amino-acid polypeptide reads, in one-letter code: UPF0201 protein Saci_1285 (145 aa).

It belongs to the UPF0201 family.

In Sulfolobus acidocaldarius (strain ATCC 33909 / DSM 639 / JCM 8929 / NBRC 15157 / NCIMB 11770), this protein is UPF0201 protein Saci_1285.